A 182-amino-acid polypeptide reads, in one-letter code: Troponin I, fast skeletal muscle (182 aa).

Position 2 is an N-acetylglycine (Gly-2). The involved in binding TNC stretch occupies residues 2–48 (GDEEKRNRAITARRQHLKSVMLQIAATELEKEESRRESEKENYLSEH). Thr-12 carries the phosphothreonine modification. Basic and acidic residues predominate over residues 29-45 (ELEKEESRRESEKENYL). Residues 29–53 (ELEKEESRRESEKENYLSEHCPPLH) form a disordered region. The involved in binding TNC and actin stretch occupies residues 97-117 (NQKLFDLRGKFKRPPLRRVRM). Ser-118 carries the post-translational modification Phosphoserine.

The protein belongs to the troponin I family. As to quaternary structure, binds to actin and tropomyosin.

In terms of biological role, troponin I is the inhibitory subunit of troponin, the thin filament regulatory complex which confers calcium-sensitivity to striated muscle actomyosin ATPase activity. In Mus musculus (Mouse), this protein is Troponin I, fast skeletal muscle (Tnni2).